Here is a 165-residue protein sequence, read N- to C-terminus: Cell division protein SepF (165 aa).

The interval 23 to 75 (DEYGDYAGDYETQETAPVATRSSKRESRPAPVSDLSERRRPASGPTGVVAELS) is disordered.

Belongs to the SepF family. As to quaternary structure, homodimer. Interacts with FtsZ.

The protein localises to the cytoplasm. In terms of biological role, cell division protein that is part of the divisome complex and is recruited early to the Z-ring. Probably stimulates Z-ring formation, perhaps through the cross-linking of FtsZ protofilaments. Its function overlaps with FtsA. The protein is Cell division protein SepF of Nocardioides sp. (strain ATCC BAA-499 / JS614).